A 130-amino-acid polypeptide reads, in one-letter code: Small ribosomal subunit protein uS9 (130 aa).

The protein belongs to the universal ribosomal protein uS9 family.

The protein is Small ribosomal subunit protein uS9 of Ralstonia nicotianae (strain ATCC BAA-1114 / GMI1000) (Ralstonia solanacearum).